We begin with the raw amino-acid sequence, 416 residues long: Tyrosine--tRNA ligase (416 aa).

Tyr40 is a binding site for L-tyrosine. A 'HIGH' region motif is present at residues 45–54; it reads ATAASLHVGH. Positions 177 and 181 each coordinate L-tyrosine. A 'KMSKS' region motif is present at residues 237-241; that stretch reads KMGKS. Lys240 serves as a coordination point for ATP. The region spanning 351-416 is the S4 RNA-binding domain; that stretch reads LSVAHFLVAA…RKKHKLVRLS (66 aa).

This sequence belongs to the class-I aminoacyl-tRNA synthetase family. TyrS type 1 subfamily. In terms of assembly, homodimer.

Its subcellular location is the cytoplasm. It catalyses the reaction tRNA(Tyr) + L-tyrosine + ATP = L-tyrosyl-tRNA(Tyr) + AMP + diphosphate + H(+). Functionally, catalyzes the attachment of tyrosine to tRNA(Tyr) in a two-step reaction: tyrosine is first activated by ATP to form Tyr-AMP and then transferred to the acceptor end of tRNA(Tyr). The chain is Tyrosine--tRNA ligase from Cereibacter sphaeroides (strain KD131 / KCTC 12085) (Rhodobacter sphaeroides).